The chain runs to 319 residues: MFPFRRNVLAFAALLALSSPVLAGKLAIVIDDFGYRPHNENQVLAMPSAISVAVLPDSPHAREMATKAHNSGHEVLIHLPMAPLSKQPLEKNTLRPEMSSDEIERIIRSAVNNVPYAVGINNHMGSKMTSNLFGMQKVMQALERYNLYFLDSVTIGNTQAMRAAQGTGVKVIKRKVFLDDSQNEADIRVQFNRAIDLARRNGSTIAIGHPHPATVRVLQQMVYNLPPDITLVKASSLLNEPQVDTSTPPKNAVPDAPRNPFRGVKLCKPKKPIEPVYANRFFEVLSESISQSTLIVYFQHQWQGWGKQPEAAKFNASAN.

Positions 1-23 (MFPFRRNVLAFAALLALSSPVLA) are cleaved as a signal peptide.

This sequence to H.influenzae HI_0755.

This is an uncharacterized protein from Escherichia coli (strain K12).